The chain runs to 534 residues: Apolipoprotein N-acyltransferase (534 aa).

Helical transmembrane passes span 8-28 (VILV…AFAV), 31-51 (LPPF…VWLI), 69-89 (AFAV…WWLG), 105-125 (LAIL…VALA), 127-147 (IFWS…GLME), 178-198 (VIGA…PALF), and 208-228 (VALA…ALYL). Positions 246-496 (VQPDIDQAAK…TGFIDATVDS (251 aa)) constitute a CN hydrolase domain. Catalysis depends on E291, which acts as the Proton acceptor. K355 is a catalytic residue. The active-site Nucleophile is C408. The chain crosses the membrane as a helical span at residues 511-531 (FWLTEALLILIALISREGFIF).

Belongs to the CN hydrolase family. Apolipoprotein N-acyltransferase subfamily.

It is found in the cell inner membrane. It catalyses the reaction N-terminal S-1,2-diacyl-sn-glyceryl-L-cysteinyl-[lipoprotein] + a glycerophospholipid = N-acyl-S-1,2-diacyl-sn-glyceryl-L-cysteinyl-[lipoprotein] + a 2-acyl-sn-glycero-3-phospholipid + H(+). The protein operates within protein modification; lipoprotein biosynthesis (N-acyl transfer). Catalyzes the phospholipid dependent N-acylation of the N-terminal cysteine of apolipoprotein, the last step in lipoprotein maturation. The polypeptide is Apolipoprotein N-acyltransferase (Rhizobium etli (strain CIAT 652)).